The chain runs to 785 residues: Penicillin-binding protein 1A (785 aa).

The disordered stretch occupies residues 1-61; that stretch reads MPPDDRLTAV…SGPGGPSGPG (61 aa). The span at 33–45 shows a compositional bias: pro residues; that stretch reads SPPPKPPPPPPPG. A compositionally biased stretch (gly residues) spans 46-59; sequence RGGGGPSGPGGPSG. The chain crosses the membrane as a helical span at residues 77-97; sequence IAVAVMVLLPLITFGMAYMIV. The interval 118–299 is transglycosylase; that stretch reads GSEIARIVPP…RWNWVLDGMV (182 aa). The active-site Proton donor; for transglycosylase activity is the E151. Residues 392 to 662 are transpeptidase; the sequence is AVVSIDPRTG…EGVKPLVNKW (271 aa). The active-site Acyl-ester intermediate; for transpeptidase activity is S426. 3 disordered regions span residues 605 to 626, 690 to 726, and 738 to 785; these read SRGH…VQLG, ESFP…QPSV, and GITI…PPPP. Composition is skewed to pro residues over residues 708–721 and 743–758; these read PAAP…PTDP and IGPP…PGAP. A compositionally biased stretch (low complexity) spans 759-775; that stretch reads GAPVGPGAPEVPVAPGA.

The protein localises to the cell membrane. The catalysed reaction is [GlcNAc-(1-&gt;4)-Mur2Ac(oyl-L-Ala-gamma-D-Glu-L-Lys-D-Ala-D-Ala)](n)-di-trans,octa-cis-undecaprenyl diphosphate + beta-D-GlcNAc-(1-&gt;4)-Mur2Ac(oyl-L-Ala-gamma-D-Glu-L-Lys-D-Ala-D-Ala)-di-trans,octa-cis-undecaprenyl diphosphate = [GlcNAc-(1-&gt;4)-Mur2Ac(oyl-L-Ala-gamma-D-Glu-L-Lys-D-Ala-D-Ala)](n+1)-di-trans,octa-cis-undecaprenyl diphosphate + di-trans,octa-cis-undecaprenyl diphosphate + H(+). It catalyses the reaction Preferential cleavage: (Ac)2-L-Lys-D-Ala-|-D-Ala. Also transpeptidation of peptidyl-alanyl moieties that are N-acyl substituents of D-alanine.. It functions in the pathway cell wall biogenesis; peptidoglycan biosynthesis. Its function is as follows. Cell wall formation. Synthesis of cross-linked peptidoglycan from the lipid intermediates. The enzyme has a penicillin-insensitive transglycosylase N-terminal domain (formation of linear glycan strands) and a penicillin-sensitive transpeptidase C-terminal domain (cross-linking of the peptide subunits). In Mycolicibacterium smegmatis (strain ATCC 700084 / mc(2)155) (Mycobacterium smegmatis), this protein is Penicillin-binding protein 1A (ponA1).